Consider the following 474-residue polypeptide: GTPase Der (474 aa).

2 consecutive EngA-type G domains span residues 2–166 (LRIA…NVPE) and 212–385 (LKIA…TTVS). Residues 8-15 (GRPNVGKS), 55-59 (DTGGV), 118-121 (NKAD), 218-225 (GRPNVGKS), 265-269 (DTAGL), and 330-333 (NKWD) each bind GTP. Positions 386–470 (SKVPTPVVNK…PFDLEFKEKT (85 aa)) constitute a KH-like domain.

This sequence belongs to the TRAFAC class TrmE-Era-EngA-EngB-Septin-like GTPase superfamily. EngA (Der) GTPase family. As to quaternary structure, associates with the 50S ribosomal subunit.

Functionally, GTPase that plays an essential role in the late steps of ribosome biogenesis. The protein is GTPase Der of Chlamydia abortus (strain DSM 27085 / S26/3) (Chlamydophila abortus).